The following is a 337-amino-acid chain: ATP-dependent 6-phosphofructokinase (337 aa).

G11 serves as a coordination point for ATP. Position 21–25 (21–25) interacts with ADP; it reads RAVVR. ATP-binding positions include 72 to 73 and 102 to 105; these read RY and GDGS. Residue D103 participates in Mg(2+) binding. A substrate-binding site is contributed by 125–127; that stretch reads TID. Residue D127 is the Proton acceptor of the active site. Residue R154 participates in ADP binding. Substrate is bound by residues R162 and 169–171; that span reads MGR. Residues 185–187 and 214–216 contribute to the ADP site; these read GAD and KNH. Substrate contacts are provided by residues E223, R245, and 251-254; that span reads HILR.

The protein belongs to the phosphofructokinase type A (PFKA) family. ATP-dependent PFK group I subfamily. Prokaryotic clade 'B1' sub-subfamily. Homotetramer. It depends on Mg(2+) as a cofactor.

The protein localises to the cytoplasm. It carries out the reaction beta-D-fructose 6-phosphate + ATP = beta-D-fructose 1,6-bisphosphate + ADP + H(+). Its pathway is carbohydrate degradation; glycolysis; D-glyceraldehyde 3-phosphate and glycerone phosphate from D-glucose: step 3/4. Its activity is regulated as follows. Allosterically activated by ADP and other diphosphonucleosides, and allosterically inhibited by phosphoenolpyruvate. Catalyzes the phosphorylation of D-fructose 6-phosphate to fructose 1,6-bisphosphate by ATP, the first committing step of glycolysis. In Streptococcus mutans serotype c (strain ATCC 700610 / UA159), this protein is ATP-dependent 6-phosphofructokinase.